The following is a 98-amino-acid chain: Integration host factor subunit alpha (98 aa).

The tract at residues 51–71 (NFDLRDKNERPGRNPKTGEDI) is disordered. A compositionally biased stretch (basic and acidic residues) spans 53-69 (DLRDKNERPGRNPKTGE).

It belongs to the bacterial histone-like protein family. As to quaternary structure, heterodimer of an alpha and a beta chain.

Functionally, this protein is one of the two subunits of integration host factor, a specific DNA-binding protein that functions in genetic recombination as well as in transcriptional and translational control. The sequence is that of Integration host factor subunit alpha from Vibrio cholerae serotype O1 (strain ATCC 39541 / Classical Ogawa 395 / O395).